A 189-amino-acid polypeptide reads, in one-letter code: Pyridoxal 5'-phosphate synthase subunit PdxT (189 aa).

Residue 48-50 (GES) coordinates L-glutamine. The active-site Nucleophile is the cysteine 80. Residues arginine 107 and 136–137 (IR) each bind L-glutamine. Residues histidine 172 and glutamate 174 each act as charge relay system in the active site.

Belongs to the glutaminase PdxT/SNO family. In terms of assembly, in the presence of PdxS, forms a dodecamer of heterodimers. Only shows activity in the heterodimer.

The enzyme catalyses aldehydo-D-ribose 5-phosphate + D-glyceraldehyde 3-phosphate + L-glutamine = pyridoxal 5'-phosphate + L-glutamate + phosphate + 3 H2O + H(+). It carries out the reaction L-glutamine + H2O = L-glutamate + NH4(+). It participates in cofactor biosynthesis; pyridoxal 5'-phosphate biosynthesis. Functionally, catalyzes the hydrolysis of glutamine to glutamate and ammonia as part of the biosynthesis of pyridoxal 5'-phosphate. The resulting ammonia molecule is channeled to the active site of PdxS. The chain is Pyridoxal 5'-phosphate synthase subunit PdxT from Ruminiclostridium cellulolyticum (strain ATCC 35319 / DSM 5812 / JCM 6584 / H10) (Clostridium cellulolyticum).